The following is a 171-amino-acid chain: ASQKRPSQRHGSKYLASASTMDHARHGFLPRHRDTGIDSLGRFFGADRGAPKRGSGKDGHHAARTTHYGSLPQKAQHGRPQDENPVVHFFKNIVTPRTPPPSQGKGRGLSLSRFSWGAEGQKPGFGYGGRAPDYKPAHKGLKGAQDAQGTLSKIFKLGGRDSRSGSPMARR.

Residue Ala-1 is modified to N-acetylalanine. Positions 1–12 (ASQKRPSQRHGS) are enriched in basic residues. Positions 1–171 (ASQKRPSQRH…SRSGSPMARR (171 aa)) are disordered. 2 positions are modified to phosphoserine: Ser-7 and Ser-12. Tyr-14 bears the Phosphotyrosine mark. A Phosphoserine modification is found at Ser-19. Thr-20 carries the phosphothreonine modification. Citrulline occurs at positions 25 and 31. Phosphothreonine is present on Thr-35. Ser-39 carries the post-translational modification Phosphoserine. Arg-42 and Arg-48 each carry omega-N-methylarginine. Ser-55 is subject to Phosphoserine. Residue Thr-66 is modified to Phosphothreonine. Phosphotyrosine is present on Tyr-68. Thr-95 and Thr-98 each carry phosphothreonine. The residue at position 103 (Gln-103) is a Deamidated glutamine. Arg-107 carries the omega-N-methylarginine; alternate modification. Arg-107 carries the post-translational modification Symmetric dimethylarginine; alternate. Ser-115 is subject to Phosphoserine. Lys-122 carries the N6-acetyllysine modification. Citrulline is present on Arg-130. Position 148 is a deamidated glutamine (Gln-148). Arg-160 is subject to Citrulline. The residue at position 162 (Ser-162) is a Phosphoserine. Ser-166 carries the post-translational modification Phosphoserine; by UHMK1. Citrulline is present on Arg-171.

The protein belongs to the myelin basic protein family. In terms of assembly, homodimer. Post-translationally, as in other animals, several charge isomers may be produced as a result of optional post-translational modifications, such as phosphorylation of serine or threonine residues, deamidation of glutamine or asparagine residues, citrullination and methylation of arginine residues. Phosphorylated by TAOK2, VRK2, MAPK11, MAPK12, MAPK14 and MINK1. In terms of processing, proteolytically cleaved in B cell lysosomes by cathepsin CTSG which degrades the major immunogenic MBP epitope and prevents the activation of MBP-specific autoreactive T cells.

Its subcellular location is the myelin membrane. Functionally, is, with PLP, the most abundant protein component of the myelin membrane in the CNS. Has a role in both the formation and stabilization of this compact multilayer arrangement of bilayers. Each splice variant and charge isomer may have a specialized function in the assembly of an optimized, biochemically functional myelin membrane. In Sus scrofa (Pig), this protein is Myelin basic protein (MBP).